Here is a 623-residue protein sequence, read N- to C-terminus: UvrABC system protein C (623 aa).

The GIY-YIG domain occupies 12–91 (FSPGVYLYKD…IKQYKPRFNI (80 aa)). The UVR domain occupies 201–236 (SDLARGLRARMEAASLEMRFEEAAGLRDLITTVEEI). A disordered region spans residues 604 to 623 (PVASVAQSEDAAPDVPDPQA).

Belongs to the UvrC family. Interacts with UvrB in an incision complex.

The protein localises to the cytoplasm. The UvrABC repair system catalyzes the recognition and processing of DNA lesions. UvrC both incises the 5' and 3' sides of the lesion. The N-terminal half is responsible for the 3' incision and the C-terminal half is responsible for the 5' incision. In Solibacter usitatus (strain Ellin6076), this protein is UvrABC system protein C.